Consider the following 917-residue polypeptide: Hexokinase-2 (917 aa).

Position 1 is an N-acetylmethionine (methionine 1). Positions 1-16 (MIASHLLAYFFTELNH) are mitochondrial-binding peptide (MBP). Hexokinase domains are found at residues 16-458 (HDQV…MVTA) and 464-906 (ADQH…LITA). Residues arginine 30 and 84–89 (DLGGTN) contribute to the ATP site. Positions 73–207 (DGTEHGEFLA…DFDIDIVAVV (135 aa)) are hexokinase small subdomain 1. 84-88 (DLGGT) lines the D-glucose 6-phosphate pocket. D-glucose is bound by residues 155 to 156 (SF), 172 to 173 (TK), and 208 to 209 (ND). Positions 208–447 (NDTVGTMMTC…CDVRFLRSED (240 aa)) are hexokinase large subdomain 1. The D-glucose 6-phosphate site is built by aspartate 209 and threonine 232. Residues asparagine 235, glutamate 260, and 291–294 (QLFE) each bind D-glucose. 413-415 (DGS) is a D-glucose 6-phosphate binding site. 425–426 (KR) contacts ATP. D-glucose 6-phosphate is bound by residues serine 449 and 532-536 (DLGGT). The hexokinase small subdomain 2 stretch occupies residues 521 to 655 (DGTEKGDFLA…EFDLDVVAVV (135 aa)). 532 to 537 (DLGGTN) contributes to the ATP binding site. Residues 603 to 604 (SF), 620 to 621 (TK), and 656 to 657 (ND) contribute to the D-glucose site. Residues 656–895 (NDTVGTMMTC…CDVSFLQSED (240 aa)) form a hexokinase large subdomain 2 region. Aspartate 657 and threonine 680 together coordinate D-glucose 6-phosphate. Residue threonine 680 coordinates ATP. D-glucose is bound by residues 682–683 (SN), glutamate 708, and 739–742 (QRFE). Residues 747 to 748 (GM), 784 to 788 (TKFLS), and 863 to 867 (TLYKL) contribute to the ATP site. D-glucose 6-phosphate-binding positions include 861–863 (DGT) and serine 897.

The protein belongs to the hexokinase family. Monomer. Interacts with TIGAR; the interaction increases hexokinase activity in a hypoxia- and HIF1A-dependent manner. Predominant hexokinase isozyme expressed in insulin-responsive tissues such as skeletal muscle.

The protein resides in the mitochondrion outer membrane. The protein localises to the cytoplasm. It localises to the cytosol. The catalysed reaction is a D-hexose + ATP = a D-hexose 6-phosphate + ADP + H(+). The enzyme catalyses D-fructose + ATP = D-fructose 6-phosphate + ADP + H(+). It carries out the reaction D-glucose + ATP = D-glucose 6-phosphate + ADP + H(+). It participates in carbohydrate metabolism; hexose metabolism. Its pathway is carbohydrate degradation; glycolysis; D-glyceraldehyde 3-phosphate and glycerone phosphate from D-glucose: step 1/4. With respect to regulation, hexokinase activity is specifically inhibited by 2,6-disubstituted glucosamines. Functionally, catalyzes the phosphorylation of hexose, such as D-glucose and D-fructose, to hexose 6-phosphate (D-glucose 6-phosphate and D-fructose 6-phosphate, respectively). Mediates the initial step of glycolysis by catalyzing phosphorylation of D-glucose to D-glucose 6-phosphate. Plays a key role in maintaining the integrity of the outer mitochondrial membrane by preventing the release of apoptogenic molecules from the intermembrane space and subsequent apoptosis. The chain is Hexokinase-2 from Homo sapiens (Human).